Here is a 93-residue protein sequence, read N- to C-terminus: Alpha-defensin 7 (93 aa).

The first 19 residues, 1-19 (MKTLILLSALVLLAFQVQA), serve as a signal peptide directing secretion. Residues 20 to 58 (DPIQNTDEETKTEEQPGEDDQAVSVSFGDPEGSSLQEES) constitute a propeptide that is removed on maturation. Residues 22–56 (IQNTDEETKTEEQPGEDDQAVSVSFGDPEGSSLQE) form a disordered region. Cystine bridges form between Cys-64–Cys-92, Cys-66–Cys-81, and Cys-71–Cys-91.

This sequence belongs to the alpha-defensin family. As to expression, paneth cells of the small bowel.

The protein localises to the secreted. In terms of biological role, probably contributes to the antimicrobial barrier function of the small bowel mucosa. In Mus musculus (Mouse), this protein is Alpha-defensin 7 (Defa7).